Here is a 355-residue protein sequence, read N- to C-terminus: 3-isopropylmalate dehydrogenase (355 aa).

Positions 90, 100, 128, and 222 each coordinate substrate. 3 residues coordinate Mg(2+): Asp222, Asp246, and Asp250. 280–292 (GSAPDIAGKGVAN) lines the NAD(+) pocket.

Belongs to the isocitrate and isopropylmalate dehydrogenases family. LeuB type 1 subfamily. In terms of assembly, homodimer. Mg(2+) serves as cofactor. It depends on Mn(2+) as a cofactor.

It localises to the cytoplasm. The catalysed reaction is (2R,3S)-3-isopropylmalate + NAD(+) = 4-methyl-2-oxopentanoate + CO2 + NADH. Its pathway is amino-acid biosynthesis; L-leucine biosynthesis; L-leucine from 3-methyl-2-oxobutanoate: step 3/4. Catalyzes the oxidation of 3-carboxy-2-hydroxy-4-methylpentanoate (3-isopropylmalate) to 3-carboxy-4-methyl-2-oxopentanoate. The product decarboxylates to 4-methyl-2 oxopentanoate. The chain is 3-isopropylmalate dehydrogenase from Cupriavidus metallidurans (strain ATCC 43123 / DSM 2839 / NBRC 102507 / CH34) (Ralstonia metallidurans).